The primary structure comprises 291 residues: uncharacterized protein (291 aa).

2 consecutive transmembrane segments (helical) span residues 42–62 (IFFFLILILVFVLWILVRALW) and 86–106 (TIFPCFISIFIVEPSFALALD).

It belongs to the cytochrome c oxidase subunit 2 family.

It localises to the mitochondrion membrane. This is an uncharacterized protein from Arabidopsis thaliana (Mouse-ear cress).